The primary structure comprises 274 residues: Nickel/cobalt efflux system RcnA (274 aa).

Residues 1–12 lie on the Periplasmic side of the membrane; it reads MTEFTTLLQQGN. Residues 13-33 form a helical membrane-spanning segment; sequence AWFFIPSAILLGALHGLEPGH. Residues 34–56 lie on the Cytoplasmic side of the membrane; that stretch reads SKTMMAAFIIAIKGTIKQAVMLG. The helical transmembrane segment at 57–77 threads the bilayer; sequence LAATISHTAVVWLIAFGGMVI. Topologically, residues 78-86 are periplasmic; that stretch reads SKRFTAQSA. Residues 87–107 traverse the membrane as a helical segment; it reads EPWLQLISAVIIISTAFWMFW. The Cytoplasmic segment spans residues 108–175; it reads RTWRGERNWL…DGREVTNWQI (68 aa). Residues 127–153 form a disordered region; the sequence is HHHHDHEHHHDHGHHHHHEHGEYQDAH. Positions 129–144 are enriched in basic residues; that stretch reads HHDHEHHHDHGHHHHH. Residues 176 to 196 form a helical membrane-spanning segment; sequence LLFGLTGGLIPCPAAITVLLI. The Periplasmic portion of the chain corresponds to 197–209; the sequence is CIQLKALTLGATL. Residues 210-230 form a helical membrane-spanning segment; the sequence is VVSFSIGLALTLVTVGVGAAI. At 231-251 the chain is on the cytoplasmic side; the sequence is SVQQVAKRWSGFNTLAKRAPY. The chain crosses the membrane as a helical span at residues 252-272; sequence FSSLLIGLVGVYMGVHGFMGI. The Periplasmic portion of the chain corresponds to 273-274; that stretch reads MR.

This sequence belongs to the NiCoT transporter (TC 2.A.52) family. RcnA subfamily.

It localises to the cell inner membrane. Efflux system for nickel and cobalt. This Escherichia coli (strain K12) protein is Nickel/cobalt efflux system RcnA (rcnA).